A 316-amino-acid polypeptide reads, in one-letter code: Acetylglutamate kinase (316 aa).

Substrate is bound by residues 76-77, arginine 98, and asparagine 207; that span reads GG.

Belongs to the acetylglutamate kinase family. ArgB subfamily.

Its subcellular location is the cytoplasm. The catalysed reaction is N-acetyl-L-glutamate + ATP = N-acetyl-L-glutamyl 5-phosphate + ADP. Its pathway is amino-acid biosynthesis; L-arginine biosynthesis; N(2)-acetyl-L-ornithine from L-glutamate: step 2/4. In terms of biological role, catalyzes the ATP-dependent phosphorylation of N-acetyl-L-glutamate. The polypeptide is Acetylglutamate kinase (Paenarthrobacter aurescens (strain TC1)).